The sequence spans 499 residues: Glycerol kinase (499 aa).

Threonine 12 is a binding site for ADP. ATP-binding residues include threonine 12, threonine 13, and serine 14. Threonine 12 provides a ligand contact to sn-glycerol 3-phosphate. Position 16 (arginine 16) interacts with ADP. Sn-glycerol 3-phosphate-binding residues include arginine 82, glutamate 83, tyrosine 134, and aspartate 245. 5 residues coordinate glycerol: arginine 82, glutamate 83, tyrosine 134, aspartate 245, and glutamine 246. The ADP site is built by threonine 267 and glycine 311. Residues threonine 267, glycine 311, glutamine 315, and glycine 412 each coordinate ATP. ADP-binding residues include glycine 412 and asparagine 416.

This sequence belongs to the FGGY kinase family.

The enzyme catalyses glycerol + ATP = sn-glycerol 3-phosphate + ADP + H(+). Its pathway is polyol metabolism; glycerol degradation via glycerol kinase pathway; sn-glycerol 3-phosphate from glycerol: step 1/1. Inhibited by fructose 1,6-bisphosphate (FBP). Functionally, key enzyme in the regulation of glycerol uptake and metabolism. Catalyzes the phosphorylation of glycerol to yield sn-glycerol 3-phosphate. The chain is Glycerol kinase from Brucella anthropi (strain ATCC 49188 / DSM 6882 / CCUG 24695 / JCM 21032 / LMG 3331 / NBRC 15819 / NCTC 12168 / Alc 37) (Ochrobactrum anthropi).